The chain runs to 920 residues: KIN14B-interacting protein At4g14310 (920 aa).

Positions 1-10 (MSASTNRRRL) are enriched in basic residues. Disordered stretches follow at residues 1–199 (MSAS…EKST) and 309–375 (IDGP…EKPS). A compositionally biased stretch (polar residues) spans 35 to 54 (PISSKNSNPALQKSLSSKEN). The span at 90–105 (TRSTSSGLRGRSSSPS) shows a compositional bias: low complexity. Residues 112 to 135 (SDLRKRNESRVIGEKGESGQDKKS) are compositionally biased toward basic and acidic residues. Composition is skewed to polar residues over residues 137 to 147 (LKSSGFKQGTS) and 166 to 184 (CPVN…NSIS). Residues 327–337 (LNKEELEDRLL) show a composition bias toward basic and acidic residues. Polar residues predominate over residues 345–355 (SRTQSKTSSHV). The span at 357 to 374 (KGHDSVESNKAVNAEEKP) shows a compositional bias: basic and acidic residues. A coiled-coil region spans residues 435-463 (TEILRANEALEEIDDEENREEMELEEIDD).

Interacts with KIN14B, CDKA-1, CKS1 and CKS2.

It is found in the cytoplasm. Its function is as follows. Might be involved in division plane determination. The sequence is that of KIN14B-interacting protein At4g14310 from Arabidopsis thaliana (Mouse-ear cress).